The primary structure comprises 202 residues: Small ribosomal subunit protein uS4c (202 aa).

In terms of domain architecture, S4 RNA-binding spans 90–153 (MRLDNVIFRL…KSETIISKNI (64 aa)).

This sequence belongs to the universal ribosomal protein uS4 family. In terms of assembly, part of the 30S ribosomal subunit. Contacts protein S5. The interaction surface between S4 and S5 is involved in control of translational fidelity.

Its subcellular location is the plastid. The protein resides in the chloroplast. Functionally, one of the primary rRNA binding proteins, it binds directly to 16S rRNA where it nucleates assembly of the body of the 30S subunit. Its function is as follows. With S5 and S12 plays an important role in translational accuracy. In Arbusculohypopterygium arbuscula (Moss), this protein is Small ribosomal subunit protein uS4c (rps4).